A 162-amino-acid polypeptide reads, in one-letter code: UPF0102 protein Bpet0439 (162 aa).

Residues 15–52 form a disordered region; the sequence is QAQQRQMKRRRAAAHRAARGPAPARAPRASPTQRTGTA. Residues 20-32 show a composition bias toward basic residues; it reads QMKRRRAAAHRAA. Over residues 33 to 48 the composition is skewed to low complexity; sequence RGPAPARAPRASPTQR.

The protein belongs to the UPF0102 family.

In Bordetella petrii (strain ATCC BAA-461 / DSM 12804 / CCUG 43448), this protein is UPF0102 protein Bpet0439.